We begin with the raw amino-acid sequence, 172 residues long: Small ribosomal subunit protein uS5 (172 aa).

The 64-residue stretch at 17–80 (LKEKMIAVNR…EEARRNMTKV (64 aa)) folds into the S5 DRBM domain.

Belongs to the universal ribosomal protein uS5 family. In terms of assembly, part of the 30S ribosomal subunit. Contacts proteins S4 and S8.

Functionally, with S4 and S12 plays an important role in translational accuracy. Its function is as follows. Located at the back of the 30S subunit body where it stabilizes the conformation of the head with respect to the body. In Polaromonas sp. (strain JS666 / ATCC BAA-500), this protein is Small ribosomal subunit protein uS5.